A 389-amino-acid chain; its full sequence is 8-amino-7-oxononanoate synthase (389 aa).

A substrate-binding site is contributed by Arg18. 104–105 contacts pyridoxal 5'-phosphate; sequence GY. His129 contributes to the substrate binding site. Ser176, His204, and Thr232 together coordinate pyridoxal 5'-phosphate. The residue at position 235 (Lys235) is an N6-(pyridoxal phosphate)lysine. Thr351 contributes to the substrate binding site.

It belongs to the class-II pyridoxal-phosphate-dependent aminotransferase family. BioF subfamily. Homodimer. Pyridoxal 5'-phosphate is required as a cofactor.

It carries out the reaction 6-carboxyhexanoyl-[ACP] + L-alanine + H(+) = (8S)-8-amino-7-oxononanoate + holo-[ACP] + CO2. It participates in cofactor biosynthesis; biotin biosynthesis. Catalyzes the decarboxylative condensation of pimeloyl-[acyl-carrier protein] and L-alanine to produce 8-amino-7-oxononanoate (AON), [acyl-carrier protein], and carbon dioxide. This is 8-amino-7-oxononanoate synthase from Citrifermentans bemidjiense (strain ATCC BAA-1014 / DSM 16622 / JCM 12645 / Bem) (Geobacter bemidjiensis).